The primary structure comprises 333 residues: BRISC and BRCA1-A complex member 1 (333 aa).

Met-1 carries the N-acetylmethionine modification. The disordered stretch occupies residues 1–85 (MEVAEANSPT…PWQVPASASE (85 aa)). Ser-8 bears the Phosphoserine mark. The segment covering 10 to 24 (TEEEEEEEEEGEETI) has biased composition (acidic residues). Phosphoserine is present on residues Ser-33 and Ser-53. Positions 58–67 (EAATADGGAA) are enriched in low complexity. The tract at residues 99–302 (VIICLDLSEE…LELHNCMAKL (204 aa)) is VWFA-like.

Belongs to the BABAM1 family. As to quaternary structure, component of the ARISC complex, at least composed of UIMC1/RAP80, ABRAXAS1, BRCC3/BRCC36, BABAM2 and BABAM1/NBA1. Component of the BRCA1-A complex, at least composed of BRCA1, BARD1, UIMC1/RAP80, ABRAXAS1, BRCC3/BRCC36, BABAM2 and BABAM1/NBA1. In the BRCA1-A complex, interacts directly with ABRAXAS1 and BABAM2. Component of the BRISC complex, at least composed of ABRAXAS2, BRCC3/BRCC36, BABAM2 and BABAM1/NBA1. Identified in a complex with SHMT2 and the other subunits of the BRISC complex.

The protein resides in the cytoplasm. The protein localises to the nucleus. Functionally, component of the BRCA1-A complex, a complex that specifically recognizes 'Lys-63'-linked ubiquitinated histones H2A and H2AX at DNA lesions sites, leading to target the BRCA1-BARD1 heterodimer to sites of DNA damage at double-strand breaks (DSBs). The BRCA1-A complex also possesses deubiquitinase activity that specifically removes 'Lys-63'-linked ubiquitin on histones H2A and H2AX. In the BRCA1-A complex, it is required for the complex integrity and its localization at DSBs. Component of the BRISC complex, a multiprotein complex that specifically cleaves 'Lys-63'-linked ubiquitin in various substrates. In these 2 complexes, it is probably required to maintain the stability of BABAM2 and help the 'Lys-63'-linked deubiquitinase activity mediated by BRCC3/BRCC36 component. The BRISC complex is required for normal mitotic spindle assembly and microtubule attachment to kinetochores via its role in deubiquitinating NUMA1. Plays a role in interferon signaling via its role in the deubiquitination of the interferon receptor IFNAR1; deubiquitination increases IFNAR1 activity by enhancing its stability and cell surface expression. Down-regulates the response to bacterial lipopolysaccharide (LPS) via its role in IFNAR1 deubiquitination. The chain is BRISC and BRCA1-A complex member 1 (Babam1) from Mus musculus (Mouse).